The primary structure comprises 185 residues: Ubiquitin-fold modifier-conjugating enzyme 1 (185 aa).

Residue cysteine 119 is the Glycyl thioester intermediate of the active site.

It belongs to the ubiquitin-conjugating enzyme family. UFC1 subfamily.

In terms of biological role, E2-like enzyme which forms an intermediate with UFM1 via a thioester linkage. This Oryza sativa subsp. japonica (Rice) protein is Ubiquitin-fold modifier-conjugating enzyme 1.